The primary structure comprises 206 residues: Uridine kinase (206 aa).

11–18 (GGTGSGKS) is an ATP binding site.

This sequence belongs to the uridine kinase family.

It localises to the cytoplasm. It catalyses the reaction uridine + ATP = UMP + ADP + H(+). The catalysed reaction is cytidine + ATP = CMP + ADP + H(+). It functions in the pathway pyrimidine metabolism; CTP biosynthesis via salvage pathway; CTP from cytidine: step 1/3. Its pathway is pyrimidine metabolism; UMP biosynthesis via salvage pathway; UMP from uridine: step 1/1. This is Uridine kinase from Clostridium botulinum (strain Kyoto / Type A2).